The following is a 261-amino-acid chain: Triosephosphate isomerase (261 aa).

10 to 12 (NWK) is a binding site for substrate. The active-site Electrophile is His-100. The Proton acceptor role is filled by Glu-172. Substrate is bound by residues Gly-178, Ser-218, and 239-240 (GG).

Belongs to the triosephosphate isomerase family. As to quaternary structure, homodimer.

It localises to the cytoplasm. It catalyses the reaction D-glyceraldehyde 3-phosphate = dihydroxyacetone phosphate. The protein operates within carbohydrate biosynthesis; gluconeogenesis. It participates in carbohydrate degradation; glycolysis; D-glyceraldehyde 3-phosphate from glycerone phosphate: step 1/1. Its function is as follows. Involved in the gluconeogenesis. Catalyzes stereospecifically the conversion of dihydroxyacetone phosphate (DHAP) to D-glyceraldehyde-3-phosphate (G3P). This is Triosephosphate isomerase from Mycobacterium bovis (strain BCG / Pasteur 1173P2).